The chain runs to 90 residues: Small ribosomal subunit protein bS20 (90 aa).

It belongs to the bacterial ribosomal protein bS20 family.

Its function is as follows. Binds directly to 16S ribosomal RNA. This is Small ribosomal subunit protein bS20 from Rickettsia canadensis (strain McKiel).